We begin with the raw amino-acid sequence, 313 residues long: tRNA uridine(34) hydroxylase (313 aa).

Residues 124-218 (SDPEVLLIDT…YLEEVPQQES (95 aa)) form the Rhodanese domain. The active-site Cysteine persulfide intermediate is Cys178.

The protein belongs to the TrhO family.

It carries out the reaction uridine(34) in tRNA + AH2 + O2 = 5-hydroxyuridine(34) in tRNA + A + H2O. Functionally, catalyzes oxygen-dependent 5-hydroxyuridine (ho5U) modification at position 34 in tRNAs. The sequence is that of tRNA uridine(34) hydroxylase from Pseudomonas fluorescens (strain ATCC BAA-477 / NRRL B-23932 / Pf-5).